A 176-amino-acid chain; its full sequence is Large ribosomal subunit protein uL6 (176 aa).

This sequence belongs to the universal ribosomal protein uL6 family. Part of the 50S ribosomal subunit.

In terms of biological role, this protein binds to the 23S rRNA, and is important in its secondary structure. It is located near the subunit interface in the base of the L7/L12 stalk, and near the tRNA binding site of the peptidyltransferase center. This chain is Large ribosomal subunit protein uL6, found in Methanothrix thermoacetophila (strain DSM 6194 / JCM 14653 / NBRC 101360 / PT) (Methanosaeta thermophila).